A 63-amino-acid polypeptide reads, in one-letter code: Large ribosomal subunit protein bL32 (63 aa).

It belongs to the bacterial ribosomal protein bL32 family.

This is Large ribosomal subunit protein bL32 from Lactobacillus delbrueckii subsp. bulgaricus (strain ATCC 11842 / DSM 20081 / BCRC 10696 / JCM 1002 / NBRC 13953 / NCIMB 11778 / NCTC 12712 / WDCM 00102 / Lb 14).